The primary structure comprises 467 residues: Histone acetyltransferase type B catalytic subunit (467 aa).

The disordered stretch occupies residues 1–24; the sequence is MVQKQQASAGPGTEPKKRRRVGFS. Residues 249-251 and 256-262 each bind acetyl-CoA; these read ILV and QGKGLGS. Catalysis depends on E283, which acts as the Proton donor/acceptor.

It belongs to the HAT1 family.

The protein localises to the nucleus. It is found in the cytoplasm. The catalysed reaction is L-lysyl-[protein] + acetyl-CoA = N(6)-acetyl-L-lysyl-[protein] + CoA + H(+). Its function is as follows. Acetylates soluble but not nucleosomal H4. Acetylates 'Lys-12' of histone H4. In Arabidopsis thaliana (Mouse-ear cress), this protein is Histone acetyltransferase type B catalytic subunit (HAG2).